Here is a 531-residue protein sequence, read N- to C-terminus: Chaperonin GroEL 2 (531 aa).

Residues 30–33 (TLGP), 87–91 (DGTTT), Gly-414, and Asp-494 contribute to the ATP site.

It belongs to the chaperonin (HSP60) family. As to quaternary structure, forms a cylinder of 14 subunits composed of two heptameric rings stacked back-to-back. Interacts with the co-chaperonin GroES.

It localises to the cytoplasm. It carries out the reaction ATP + H2O + a folded polypeptide = ADP + phosphate + an unfolded polypeptide.. In terms of biological role, together with its co-chaperonin GroES, plays an essential role in assisting protein folding. The GroEL-GroES system forms a nano-cage that allows encapsulation of the non-native substrate proteins and provides a physical environment optimized to promote and accelerate protein folding. In Cutibacterium acnes (strain DSM 16379 / KPA171202) (Propionibacterium acnes), this protein is Chaperonin GroEL 2.